Reading from the N-terminus, the 366-residue chain is Alanine racemase (366 aa).

K40 (proton acceptor; specific for D-alanine) is an active-site residue. K40 carries the post-translational modification N6-(pyridoxal phosphate)lysine. R136 contributes to the substrate binding site. Y263 functions as the Proton acceptor; specific for L-alanine in the catalytic mechanism. M310 lines the substrate pocket.

The protein belongs to the alanine racemase family. Pyridoxal 5'-phosphate serves as cofactor.

It catalyses the reaction L-alanine = D-alanine. Its pathway is amino-acid biosynthesis; D-alanine biosynthesis; D-alanine from L-alanine: step 1/1. Catalyzes the interconversion of L-alanine and D-alanine. May also act on other amino acids. The polypeptide is Alanine racemase (alr) (Streptococcus pyogenes serotype M6 (strain ATCC BAA-946 / MGAS10394)).